Here is a 214-residue protein sequence, read N- to C-terminus: Uracil phosphoribosyltransferase (214 aa).

5-phospho-alpha-D-ribose 1-diphosphate-binding positions include Arg81, Arg106, and 133–141; that span reads DPMLATGNS. Residues Ile196 and 201–203 each bind uracil; that span reads GDA. Asp202 contributes to the 5-phospho-alpha-D-ribose 1-diphosphate binding site.

Belongs to the UPRTase family. It depends on Mg(2+) as a cofactor.

It carries out the reaction UMP + diphosphate = 5-phospho-alpha-D-ribose 1-diphosphate + uracil. It participates in pyrimidine metabolism; UMP biosynthesis via salvage pathway; UMP from uracil: step 1/1. With respect to regulation, allosterically activated by GTP. Catalyzes the conversion of uracil and 5-phospho-alpha-D-ribose 1-diphosphate (PRPP) to UMP and diphosphate. This is Uracil phosphoribosyltransferase from Legionella pneumophila (strain Paris).